The sequence spans 133 residues: Nickel-responsive regulator (133 aa).

His76, His87, His89, and Cys95 together coordinate Ni(2+).

This sequence belongs to the transcriptional regulatory CopG/NikR family. Homotetramer. Ni(2+) is required as a cofactor.

Functionally, transcriptional repressor of the nikABCDE operon. Is active in the presence of excessive concentrations of intracellular nickel. The sequence is that of Nickel-responsive regulator from Salmonella choleraesuis (strain SC-B67).